The primary structure comprises 324 residues: Protease HtpX homolog (324 aa).

Helical transmembrane passes span 7–24 (ALLLAGLTALFMGVGYLI) and 29–46 (GALIALVVAAAMNIFTYW). Residue His-130 coordinates Zn(2+). Glu-131 is a catalytic residue. A Zn(2+)-binding site is contributed by His-134. Transmembrane regions (helical) follow at residues 145-165 (ITATIAGAISMVAQFGMFFGG) and 172-192 (GPGLIGSLALMILAPLGAMLV). Glu-201 contacts Zn(2+). The segment covering 288–305 (PASTFSRGAGTAASSGTP) has biased composition (polar residues). The segment at 288–324 (PASTFSRGAGTAASSGTPRGTGRSPWGGQPRGRGPWG) is disordered.

It belongs to the peptidase M48B family. It depends on Zn(2+) as a cofactor.

It localises to the cell inner membrane. The polypeptide is Protease HtpX homolog (Rhodopseudomonas palustris (strain TIE-1)).